The sequence spans 450 residues: Tyrosine-protein kinase CSK (450 aa).

Residue Ser-2 is modified to N-acetylserine. The SH3 domain occupies 9-70; it reads PSGTECIAKY…PANYVQKREG (62 aa). An interaction with PTPN22 region spans residues 9-70; the sequence is PSGTECIAKY…PANYVQKREG (62 aa). The 90-residue stretch at 82 to 171 folds into the SH2 domain; the sequence is WFHGKITREQ…GLCTRLIKPK (90 aa). The residue at position 184 (Tyr-184) is a Phosphotyrosine. The 255-residue stretch at 195-449 folds into the Protein kinase domain; sequence LKLLQTIGKG…LEHIKTHELH (255 aa). ATP is bound by residues 201 to 209 and Lys-222; that span reads IGKGEFGDV. Phosphotyrosine is present on Tyr-304. The active-site Proton acceptor is Asp-314. Phosphoserine; by PKA is present on Ser-364. Position 416 is a phosphotyrosine; by autocatalysis (Tyr-416).

Belongs to the protein kinase superfamily. Tyr protein kinase family. CSK subfamily. As to quaternary structure, homodimer (via SH3-domain). Interacts with PTPN22. Interacts with phosphorylated SIT1, PAG1, LIME1 and TGFB1I1; these interactions serve to recruit CSK to the membrane where it can phosphorylate and inhibit Src-family kinases. Interacts with SRCIN1. Interacts with RHOH. Interacts (via SH2 domain) with SCIMP; this interaction is dependent on phosphorylation of SCIMP 'Tyr-107'. Interacts (via SH2 domain) with PRAG1 (when phosphorylated at 'Tyr-391'); this interaction prevents translocation of CSK from the cytoplasm to the membrane leading to increased activity of CSK. Interacts with LRRK1. Requires Mg(2+) as cofactor. Mn(2+) serves as cofactor. In terms of processing, phosphorylated at Ser-364 by PKA, leading to increased activity. Autophosphorylated. In terms of tissue distribution, expressed in lung and macrophages.

It is found in the cytoplasm. Its subcellular location is the cell membrane. It catalyses the reaction L-tyrosyl-[protein] + ATP = O-phospho-L-tyrosyl-[protein] + ADP + H(+). Its function is as follows. Non-receptor tyrosine-protein kinase that plays an important role in the regulation of cell growth, differentiation, migration and immune response. Phosphorylates tyrosine residues located in the C-terminal tails of Src-family kinases (SFKs) including LCK, SRC, HCK, FYN, LYN, CSK or YES1. Upon tail phosphorylation, Src-family members engage in intramolecular interactions between the phosphotyrosine tail and the SH2 domain that result in an inactive conformation. To inhibit SFKs, CSK is recruited to the plasma membrane via binding to transmembrane proteins or adapter proteins located near the plasma membrane. Suppresses signaling by various surface receptors, including T-cell receptor (TCR) and B-cell receptor (BCR) by phosphorylating and maintaining inactive several positive effectors such as FYN or LCK. This is Tyrosine-protein kinase CSK (CSK) from Homo sapiens (Human).